The chain runs to 127 residues: Large ribosomal subunit protein bL19 (127 aa).

This sequence belongs to the bacterial ribosomal protein bL19 family.

In terms of biological role, this protein is located at the 30S-50S ribosomal subunit interface and may play a role in the structure and function of the aminoacyl-tRNA binding site. This Myxococcus xanthus (strain DK1622) protein is Large ribosomal subunit protein bL19.